The primary structure comprises 360 residues: Histidinol-phosphate aminotransferase (360 aa).

An N6-(pyridoxal phosphate)lysine modification is found at K223.

The protein belongs to the class-II pyridoxal-phosphate-dependent aminotransferase family. Histidinol-phosphate aminotransferase subfamily. Homodimer. Requires pyridoxal 5'-phosphate as cofactor.

It carries out the reaction L-histidinol phosphate + 2-oxoglutarate = 3-(imidazol-4-yl)-2-oxopropyl phosphate + L-glutamate. It participates in amino-acid biosynthesis; L-histidine biosynthesis; L-histidine from 5-phospho-alpha-D-ribose 1-diphosphate: step 7/9. This chain is Histidinol-phosphate aminotransferase, found in Bacillus velezensis (strain DSM 23117 / BGSC 10A6 / LMG 26770 / FZB42) (Bacillus amyloliquefaciens subsp. plantarum).